We begin with the raw amino-acid sequence, 138 residues long: Acidic phospholipase A2 PePLA2 (138 aa).

The N-terminal stretch at 1–16 (MRTLWIMAVLLLGVEG) is a signal peptide. Intrachain disulfides connect Cys-42–Cys-131, Cys-44–Cys-60, Cys-59–Cys-110, Cys-65–Cys-138, Cys-66–Cys-103, Cys-73–Cys-97, and Cys-91–Cys-101. The Ca(2+) site is built by Tyr-43, Gly-45, and Gly-47. His-63 is a catalytic residue. Asp-64 is a binding site for Ca(2+). Residue Asp-104 is part of the active site.

It belongs to the phospholipase A2 family. Group II subfamily. D49 sub-subfamily. Ca(2+) serves as cofactor. In terms of tissue distribution, expressed by the venom gland.

Its subcellular location is the secreted. The catalysed reaction is a 1,2-diacyl-sn-glycero-3-phosphocholine + H2O = a 1-acyl-sn-glycero-3-phosphocholine + a fatty acid + H(+). In terms of biological role, PLA2 catalyzes the calcium-dependent hydrolysis of the 2-acyl groups in 3-sn-phosphoglycerides. The polypeptide is Acidic phospholipase A2 PePLA2 (Protobothrops elegans (Elegant pitviper)).